The sequence spans 190 residues: UPF0149 protein NT01EI_3357 (190 aa).

This sequence belongs to the UPF0149 family.

In Edwardsiella ictaluri (strain 93-146), this protein is UPF0149 protein NT01EI_3357.